Reading from the N-terminus, the 175-residue chain is ATP synthase subunit b (175 aa).

The helical transmembrane segment at 23-43 (TGITFLVLLFVLGKFAWGPIV) threads the bilayer.

Belongs to the ATPase B chain family. As to quaternary structure, F-type ATPases have 2 components, F(1) - the catalytic core - and F(0) - the membrane proton channel. F(1) has five subunits: alpha(3), beta(3), gamma(1), delta(1), epsilon(1). F(0) has three main subunits: a(1), b(2) and c(10-14). The alpha and beta chains form an alternating ring which encloses part of the gamma chain. F(1) is attached to F(0) by a central stalk formed by the gamma and epsilon chains, while a peripheral stalk is formed by the delta and b chains.

It localises to the cell inner membrane. Its function is as follows. F(1)F(0) ATP synthase produces ATP from ADP in the presence of a proton or sodium gradient. F-type ATPases consist of two structural domains, F(1) containing the extramembraneous catalytic core and F(0) containing the membrane proton channel, linked together by a central stalk and a peripheral stalk. During catalysis, ATP synthesis in the catalytic domain of F(1) is coupled via a rotary mechanism of the central stalk subunits to proton translocation. Functionally, component of the F(0) channel, it forms part of the peripheral stalk, linking F(1) to F(0). The chain is ATP synthase subunit b from Anaeromyxobacter sp. (strain Fw109-5).